The sequence spans 243 residues: Carboxy-S-adenosyl-L-methionine synthase (243 aa).

Residues Tyr40, 65–67 (GCS), 90–91 (DN), 118–119 (DI), Asn133, and Arg200 contribute to the S-adenosyl-L-methionine site.

Belongs to the class I-like SAM-binding methyltransferase superfamily. Cx-SAM synthase family. Homodimer.

The catalysed reaction is prephenate + S-adenosyl-L-methionine = carboxy-S-adenosyl-L-methionine + 3-phenylpyruvate + H2O. Catalyzes the conversion of S-adenosyl-L-methionine (SAM) to carboxy-S-adenosyl-L-methionine (Cx-SAM). This is Carboxy-S-adenosyl-L-methionine synthase from Shewanella halifaxensis (strain HAW-EB4).